Here is a 198-residue protein sequence, read N- to C-terminus: MATLWGGLLRLGSLLSLSCLALSVLLLAQLSDAAKNFEDVRCKCICPPYKENSGHIYNKNISQKDCDCLHVVEPMPVRGPDVEAYCLRCECKYEERSSVTIKVTIIIYLSILGLLLLYMVYLTLVEPILKRRLFGHAQLIQSDDDIGDHQPFANAHDVLARSRSRANVLNKVEYAQQRWKLQVQEQRKSVFDRHVVLS.

Positions 1–33 (MATLWGGLLRLGSLLSLSCLALSVLLLAQLSDA) are cleaved as a signal peptide. The N-linked (GlcNAc...) asparagine glycan is linked to Asn-60. Residues 105 to 125 (IIIYLSILGLLLLYMVYLTLV) traverse the membrane as a helical segment. Residues Ser-142 and Ser-189 each carry the phosphoserine modification.

This sequence belongs to the TMEM9 family. Post-translationally, N-glycosylated.

The protein localises to the lysosome membrane. It is found in the early endosome membrane. Its function is as follows. Enhances production of pro-inflammatory cytokines induced by TNF, IL1B, and TLR ligands. Has a role in TNF activation of both the NF-kappaB and MAPK pathways. The protein is Transmembrane protein 9B (TMEM9B) of Homo sapiens (Human).